A 900-amino-acid polypeptide reads, in one-letter code: MGFVRKEGARCREAFWTLNPEFSEPQDTPCVEYWFDKVKSVSGMSVGEAREAFLSFFEKHGHTRVPPRPVVARWREDLYLTIASIVVFQPHVTSGLVPPPANPLVISQPSIRLEDIDNVGITIGRHLTSFEMAAHHAFNYPDRQVYWKEETVRLAFEFFTQVLGIPPELIVFKESWWEGGGNAGPSFEVAVGGLELATLVFMKYRVVDGRYEEIPLKIVDTGYGVERLAWFTQKTPTAFHAIYGSLVDDFRRMLGVEKPDENVMWAAFRVAGFLDPEDPESLRNYYQTVASLAGGDVETVRSILTREARLYSVLDHTKTIALMLGDGIVPSNSGEGYLARLVVRRALRQLSLLNAEVPLVDLVERQARFWMRDFPQLKENLDYILDAVSLEEERFRDVLRKARSIVERELKRKKRLGVDDLIRLYDSMGVPPEIAAEIAASRGAPVEVPHNFYSLVAARHRGPEKIRGYGFDETGLPRDVEEWARRFGETRRVFHEDPYAKAWKARVLGVKGRYLVADSTIFYPTGGGQIHDTGVIRVNNQQYRIIDVQKVGDAIVHVAEREIAAEPGDEVWMEIDWERRYSIMRHHTVTHVLIAAARRVLGRHAWQAGAEKTEEKGRLDITHHRPLTRDDIEKLENVVNQVIRERRRVWEDMVDKNEAEEKYGFTIYQGGVPMEKRLRLVFVEDWDVEACFGTHVRNTGEIGGFKIISYSRIQDGVVRLEYVAGDRVAIYARELEERLARIGDAVKAPRGQEEARVKGLIASLEQAREDLKRYRDYWVKTIEEAYISRARRVNGVKVLAVESLEKDRRTVQEILRKLTSRHEDLIAALVVENEGNTQVEIAAGPKAAEKVDLGALVKIVIKKVGGRGGGRGSYASLRVEGRLSADKVEELLADALENVL.

Zn(2+)-binding residues include histidine 587, histidine 591, cysteine 691, and histidine 695.

The protein belongs to the class-II aminoacyl-tRNA synthetase family. Zn(2+) serves as cofactor.

It localises to the cytoplasm. The enzyme catalyses tRNA(Ala) + L-alanine + ATP = L-alanyl-tRNA(Ala) + AMP + diphosphate. Functionally, catalyzes the attachment of alanine to tRNA(Ala) in a two-step reaction: alanine is first activated by ATP to form Ala-AMP and then transferred to the acceptor end of tRNA(Ala). Also edits incorrectly charged Ser-tRNA(Ala) and Gly-tRNA(Ala) via its editing domain. The protein is Alanine--tRNA ligase of Aeropyrum pernix (strain ATCC 700893 / DSM 11879 / JCM 9820 / NBRC 100138 / K1).